Consider the following 270-residue polypeptide: 3-methyl-2-oxobutanoate hydroxymethyltransferase (270 aa).

2 residues coordinate Mg(2+): D50 and D89. 3-methyl-2-oxobutanoate is bound by residues 50–51 (DS), D89, and K118. E120 contacts Mg(2+). E187 (proton acceptor) is an active-site residue.

The protein belongs to the PanB family. As to quaternary structure, homodecamer; pentamer of dimers. The cofactor is Mg(2+).

The protein localises to the cytoplasm. It carries out the reaction 3-methyl-2-oxobutanoate + (6R)-5,10-methylene-5,6,7,8-tetrahydrofolate + H2O = 2-dehydropantoate + (6S)-5,6,7,8-tetrahydrofolate. The protein operates within cofactor biosynthesis; (R)-pantothenate biosynthesis; (R)-pantoate from 3-methyl-2-oxobutanoate: step 1/2. Catalyzes the reversible reaction in which hydroxymethyl group from 5,10-methylenetetrahydrofolate is transferred onto alpha-ketoisovalerate to form ketopantoate. This is 3-methyl-2-oxobutanoate hydroxymethyltransferase from Helicobacter acinonychis (strain Sheeba).